We begin with the raw amino-acid sequence, 404 residues long: Putative CBL-interacting protein kinase 27 (404 aa).

The Protein kinase domain occupies Tyr11–Phe266. ATP is bound by residues Leu17–Val25 and Lys40. The Proton acceptor role is filled by Asp134. The activation loop stretch occupies residues Asp152 to Glu181. The 28-residue stretch at Asp294–Glu321 folds into the NAF domain. The interval Ala335–Leu356 is PPI.

The protein belongs to the protein kinase superfamily. CAMK Ser/Thr protein kinase family. SNF1 subfamily. Mn(2+) serves as cofactor.

The enzyme catalyses L-seryl-[protein] + ATP = O-phospho-L-seryl-[protein] + ADP + H(+). It catalyses the reaction L-threonyl-[protein] + ATP = O-phospho-L-threonyl-[protein] + ADP + H(+). In terms of biological role, CIPK serine-threonine protein kinases interact with CBL proteins. Binding of a CBL protein to the regulatory NAF domain of CIPK protein lead to the activation of the kinase in a calcium-dependent manner. In Oryza sativa subsp. japonica (Rice), this protein is Putative CBL-interacting protein kinase 27 (CIPK27).